A 251-amino-acid chain; its full sequence is Small ribosomal subunit protein uS2 (251 aa).

Position 2 is an N-acetylserine (Ser2). Residues 209–251 (EIEQQTAEEAAQEAGEEEAKEEVTEEQTEAAEWAQENADNVEW) are disordered. Over residues 218 to 237 (AAQEAGEEEAKEEVTEEQTE) the composition is skewed to acidic residues. Residues 238-251 (AAEWAQENADNVEW) are compositionally biased toward low complexity.

Belongs to the universal ribosomal protein uS2 family. In terms of assembly, component of the small ribosomal subunit. Mature ribosomes consist of a small (40S) and a large (60S) subunit. The 40S subunit contains about 33 different proteins and 1 molecule of RNA (18S). The 60S subunit contains about 49 different proteins and 3 molecules of RNA (25S, 5.8S and 5S). Interacts with RPS21.

Its subcellular location is the cytoplasm. Functionally, required for the assembly and/or stability of the 40S ribosomal subunit. Required for the processing of the 20S rRNA-precursor to mature 18S rRNA in a late step of the maturation of 40S ribosomal subunits. This Candida glabrata (strain ATCC 2001 / BCRC 20586 / JCM 3761 / NBRC 0622 / NRRL Y-65 / CBS 138) (Yeast) protein is Small ribosomal subunit protein uS2.